A 247-amino-acid polypeptide reads, in one-letter code: uncharacterized protein (247 aa).

4–28 (ALVTGGSRGIGRATALLLAQEGYTV) is a binding site for NADP(+). Ser-142 contacts substrate. Tyr-156 (proton acceptor) is an active-site residue.

Belongs to the short-chain dehydrogenases/reductases (SDR) family.

This is an uncharacterized protein from Escherichia coli (strain K12).